Here is a 233-residue protein sequence, read N- to C-terminus: Large ribosomal subunit protein uL1 (233 aa).

Belongs to the universal ribosomal protein uL1 family. In terms of assembly, part of the 50S ribosomal subunit.

Binds directly to 23S rRNA. The L1 stalk is quite mobile in the ribosome, and is involved in E site tRNA release. Its function is as follows. Protein L1 is also a translational repressor protein, it controls the translation of the L11 operon by binding to its mRNA. The sequence is that of Large ribosomal subunit protein uL1 from Pseudoalteromonas atlantica (strain T6c / ATCC BAA-1087).